A 278-amino-acid chain; its full sequence is Alcohol dehydrogenase-related 31 kDa protein (278 aa).

NAD(+) is bound at residue 11–34 (YVADCGGIALETSKVLMTKNIAKL). Ser-139 serves as a coordination point for substrate. Tyr-152 acts as the Proton acceptor in catalysis.

The protein belongs to the short-chain dehydrogenases/reductases (SDR) family.

The chain is Alcohol dehydrogenase-related 31 kDa protein (Adhr) from Drosophila pseudoobscura pseudoobscura (Fruit fly).